A 384-amino-acid chain; its full sequence is Succinate--CoA ligase [ADP-forming] subunit beta (384 aa).

Residues 9–242 enclose the ATP-grasp domain; it reads KAILAQYKVP…LNEEDPLEVE (234 aa). Residues K45, 52 to 54, E98, L101, and E106 contribute to the ATP site; that span reads GRG. The Mg(2+) site is built by N197 and D211. Substrate-binding positions include N262 and 319-321; that span reads GIL.

It belongs to the succinate/malate CoA ligase beta subunit family. As to quaternary structure, heterotetramer of two alpha and two beta subunits. Mg(2+) is required as a cofactor.

The enzyme catalyses succinate + ATP + CoA = succinyl-CoA + ADP + phosphate. It carries out the reaction GTP + succinate + CoA = succinyl-CoA + GDP + phosphate. The protein operates within carbohydrate metabolism; tricarboxylic acid cycle; succinate from succinyl-CoA (ligase route): step 1/1. Functionally, succinyl-CoA synthetase functions in the citric acid cycle (TCA), coupling the hydrolysis of succinyl-CoA to the synthesis of either ATP or GTP and thus represents the only step of substrate-level phosphorylation in the TCA. The beta subunit provides nucleotide specificity of the enzyme and binds the substrate succinate, while the binding sites for coenzyme A and phosphate are found in the alpha subunit. The chain is Succinate--CoA ligase [ADP-forming] subunit beta from Solibacter usitatus (strain Ellin6076).